The primary structure comprises 400 residues: Enolase (400 aa).

Position 153 (glutamine 153) interacts with (2R)-2-phosphoglycerate. Glutamate 195 functions as the Proton donor in the catalytic mechanism. Residues aspartate 231, glutamate 274, and aspartate 301 each contribute to the Mg(2+) site. (2R)-2-phosphoglycerate-binding residues include lysine 326, arginine 355, serine 356, and lysine 377. Residue lysine 326 is the Proton acceptor of the active site.

The protein belongs to the enolase family. Requires Mg(2+) as cofactor.

It is found in the cytoplasm. The protein resides in the secreted. The protein localises to the cell surface. It carries out the reaction (2R)-2-phosphoglycerate = phosphoenolpyruvate + H2O. It participates in carbohydrate degradation; glycolysis; pyruvate from D-glyceraldehyde 3-phosphate: step 4/5. Catalyzes the reversible conversion of 2-phosphoglycerate (2-PG) into phosphoenolpyruvate (PEP). It is essential for the degradation of carbohydrates via glycolysis. The sequence is that of Enolase from Halorubrum lacusprofundi (strain ATCC 49239 / DSM 5036 / JCM 8891 / ACAM 34).